Consider the following 367-residue polypeptide: MVLISTPPPAYAHNRKTSQEKKRRDEINAKIKELQLLIQNESDNEKMTQGDVLNRAVEVVSRMETESPGPSSNPNRKGFFDGFRSIESLTYSFIKSLGVNSDVCQDFVQRAKQFFDRERSSLLSTVSGKSKRRSESEILHSSMSYRSQSSSPSTSESGITIDRKEVKKNREQDRRDRQGEAFDALKNFIIENKLMTSHQVEKMQRLNTLDIIIAYIQNKKHNFVSRSDQEQSLYAHAIAEGKKTAKNIAFQFFKSDRHLVVRCADLEKFFEFSLSPKPLFGFPSMPIPIPPPSFPIFPFRPFPFFPMPMAPMATSPKSQQSPSYSLDSPPPSSDTSSSSIETPSTPNENSNSNPKASRKSKLFRPWE.

Residues 1 to 10 (MVLISTPPPA) show a composition bias toward pro residues. Residues 1-24 (MVLISTPPPAYAHNRKTSQEKKRR) form a disordered region. The basic motif 1 stretch occupies residues 11-24 (YAHNRKTSQEKKRR). The region spanning 11–63 (YAHNRKTSQEKKRRDEINAKIKELQLLIQNESDNEKMTQGDVLNRAVEVVSRM) is the bHLH 1 domain. A helix-loop-helix motif 1 region spans residues 25 to 63 (DEINAKIKELQLLIQNESDNEKMTQGDVLNRAVEVVSRM). 2 disordered regions span residues 133 to 177 (RSES…RRDR) and 313 to 367 (ATSP…RPWE). The segment covering 141-157 (SSMSYRSQSSSPSTSES) has biased composition (low complexity). Positions 161–177 (IDRKEVKKNREQDRRDR) are enriched in basic and acidic residues. The tract at residues 162–175 (DRKEVKKNREQDRR) is basic motif 2. The 58-residue stretch at 162 to 219 (DRKEVKKNREQDRRDRQGEAFDALKNFIIENKLMTSHQVEKMQRLNTLDIIIAYIQNK) folds into the bHLH 2 domain. Positions 176 to 219 (DRQGEAFDALKNFIIENKLMTSHQVEKMQRLNTLDIIIAYIQNK) are helix-loop-helix motif 2. The span at 313–354 (ATSPKSQQSPSYSLDSPPPSSDTSSSSIETPSTPNENSNSNP) shows a compositional bias: low complexity. The segment covering 356-367 (ASRKSKLFRPWE) has biased composition (basic residues).

In terms of assembly, interacts with unc-37.

It is found in the nucleus. Functionally, probable transcription factor. Binds 5'-TGCCACGTGTCCA-3' in vitro, probably via the E-box motif 5'-CA[TC][AG]TG-3'. Acts in embryonic development in a Notch-dependent manner, perhaps as a direct target of transcriptional regulator lag-1 in the Notch signaling pathway. Also acts in embryonic development in a Notch-independent manner. Plays a role in both Notch-dependent and -independent pathways in the execution of neuronal lineage decisions in the embryo. Also involved in regulating cell fate leading to formation of neuronal structures known as postdeirids. Involved in the pattern of cell fusion with a large syncytium known as hyp-7, during larval development, in hermaphrodites. Plays a role in regulating the activity of homeobox protein mab-5 in Pn.p cells. The protein is Regulator of fusion ref-1 of Caenorhabditis elegans.